The sequence spans 179 residues: Large ribosomal subunit protein uL5 (179 aa).

This sequence belongs to the universal ribosomal protein uL5 family. Part of the 50S ribosomal subunit; part of the 5S rRNA/L5/L18/L25 subcomplex. Contacts the 5S rRNA and the P site tRNA. Forms a bridge to the 30S subunit in the 70S ribosome.

In terms of biological role, this is one of the proteins that bind and probably mediate the attachment of the 5S RNA into the large ribosomal subunit, where it forms part of the central protuberance. In the 70S ribosome it contacts protein S13 of the 30S subunit (bridge B1b), connecting the 2 subunits; this bridge is implicated in subunit movement. Contacts the P site tRNA; the 5S rRNA and some of its associated proteins might help stabilize positioning of ribosome-bound tRNAs. The sequence is that of Large ribosomal subunit protein uL5 from Nitrosomonas eutropha (strain DSM 101675 / C91 / Nm57).